Here is a 172-residue protein sequence, read N- to C-terminus: Large ribosomal subunit protein uL10 (172 aa).

This sequence belongs to the universal ribosomal protein uL10 family. As to quaternary structure, part of the ribosomal stalk of the 50S ribosomal subunit. The N-terminus interacts with L11 and the large rRNA to form the base of the stalk. The C-terminus forms an elongated spine to which L12 dimers bind in a sequential fashion forming a multimeric L10(L12)X complex.

Forms part of the ribosomal stalk, playing a central role in the interaction of the ribosome with GTP-bound translation factors. The protein is Large ribosomal subunit protein uL10 of Rhizobium rhizogenes (strain K84 / ATCC BAA-868) (Agrobacterium radiobacter).